The sequence spans 198 residues: MIAYLSGAVREVREASAVIVAGGVGYEVFCPASTLGRLVPGQPAELNIRHVVREDAQLLFGFLDTDSLRLFDLLIGVSGVGPKLALSLLSALPVTAVAQGLLSGDVKLLSSVSGVGKKTAERLVLELQNKVPEHLAAGAPVSAGKAALTSTAGRDAIEALLALGFREPQVRSVVAELLAADPEQSADALIRKGLGKLR.

A domain I region spans residues 1–63; that stretch reads MIAYLSGAVR…EDAQLLFGFL (63 aa). Residues 64 to 142 are domain II; sequence DTDSLRLFDL…EHLAAGAPVS (79 aa). The flexible linker stretch occupies residues 143 to 150; it reads AGKAALTS. A domain III region spans residues 150–198; it reads STAGRDAIEALLALGFREPQVRSVVAELLAADPEQSADALIRKGLGKLR.

The protein belongs to the RuvA family. Homotetramer. Forms an RuvA(8)-RuvB(12)-Holliday junction (HJ) complex. HJ DNA is sandwiched between 2 RuvA tetramers; dsDNA enters through RuvA and exits via RuvB. An RuvB hexamer assembles on each DNA strand where it exits the tetramer. Each RuvB hexamer is contacted by two RuvA subunits (via domain III) on 2 adjacent RuvB subunits; this complex drives branch migration. In the full resolvosome a probable DNA-RuvA(4)-RuvB(12)-RuvC(2) complex forms which resolves the HJ.

It is found in the cytoplasm. Its function is as follows. The RuvA-RuvB-RuvC complex processes Holliday junction (HJ) DNA during genetic recombination and DNA repair, while the RuvA-RuvB complex plays an important role in the rescue of blocked DNA replication forks via replication fork reversal (RFR). RuvA specifically binds to HJ cruciform DNA, conferring on it an open structure. The RuvB hexamer acts as an ATP-dependent pump, pulling dsDNA into and through the RuvAB complex. HJ branch migration allows RuvC to scan DNA until it finds its consensus sequence, where it cleaves and resolves the cruciform DNA. The sequence is that of Holliday junction branch migration complex subunit RuvA from Deinococcus geothermalis (strain DSM 11300 / CIP 105573 / AG-3a).